Reading from the N-terminus, the 100-residue chain is Large ribosomal subunit protein uL23 (100 aa).

It belongs to the universal ribosomal protein uL23 family. As to quaternary structure, part of the 50S ribosomal subunit. Contacts protein L29, and trigger factor when it is bound to the ribosome.

One of the early assembly proteins it binds 23S rRNA. One of the proteins that surrounds the polypeptide exit tunnel on the outside of the ribosome. Forms the main docking site for trigger factor binding to the ribosome. The protein is Large ribosomal subunit protein uL23 of Acaryochloris marina (strain MBIC 11017).